Consider the following 592-residue polypeptide: MTINLHRPDIAELKPRITVFGVGGGGGNAVNNMINAGLQGVDFVVANTDAQALAMSKAERVIQLGAAVTEGLGAGALPEVGQAAADECIDEIIDHLADSHMVFITAGMGGGTGTGAAPVVARAAREKGILTVGVVTKPFQFEGARRMKTAEAGIEELQKSVDTLIVIPNQNLFRIANEKTTFADAFAMADQVLYSGVASITDLMIKEGLINLDFADVRSVMHEMGRAMMGTGEASGEGRALAAAEAAIANPLLDETSMCGARGLLISITGGRDMTLFEVDEAANRIREEVDADANVIFGAIDDESLEGVIRVSVVATGIDRLASDVVQPSHSKFQKSVSSVRKNDSGINQTASHPQSSQLRSESMVETIESLEVEVSQSQPVEEMFSPKSQIFAKPTDTASTSSRSAATYPFGHGQSDIYGKISNASRIQVNSIPQQSTAAAVSMEATAHVLSEMTNIVEQSEEKQAQIQPYIAPARMPELKDFSPFTHGQGIHSSGLEQGPRSLWQRLKQSLTYREEIEPEARLEPAVKPLQNEESHIYNKNVQKVSSQDSSVYAPHRSTKLQSRALQDQRAFVNEEDQLEIPAFLRRQAN.

Residues 24–28 (GGGGN), 111–113 (GTG), glutamate 142, arginine 146, and aspartate 190 contribute to the GTP site. The tract at residues 333–362 (KFQKSVSSVRKNDSGINQTASHPQSSQLRS) is disordered.

This sequence belongs to the FtsZ family. Homodimer. Polymerizes to form a dynamic ring structure in a strictly GTP-dependent manner. Interacts directly with several other division proteins.

It is found in the cytoplasm. Essential cell division protein that forms a contractile ring structure (Z ring) at the future cell division site. The regulation of the ring assembly controls the timing and the location of cell division. One of the functions of the FtsZ ring is to recruit other cell division proteins to the septum to produce a new cell wall between the dividing cells. Binds GTP and shows GTPase activity. In Bartonella bacilliformis, this protein is Cell division protein FtsZ.